The following is a 119-amino-acid chain: Large ribosomal subunit protein uL18 (119 aa).

The protein belongs to the universal ribosomal protein uL18 family. Part of the 50S ribosomal subunit; part of the 5S rRNA/L5/L18/L25 subcomplex. Contacts the 5S and 23S rRNAs.

Its function is as follows. This is one of the proteins that bind and probably mediate the attachment of the 5S RNA into the large ribosomal subunit, where it forms part of the central protuberance. This Lactobacillus johnsonii (strain CNCM I-12250 / La1 / NCC 533) protein is Large ribosomal subunit protein uL18.